Here is a 231-residue protein sequence, read N- to C-terminus: 26S proteasome non-ATPase regulatory subunit 10 (231 aa).

7 ANK repeats span residues 3–36, 37–69, 70–102, 103–135, 136–168, 169–201, and 202–226; these read GCVSNLMVCNLAYNGKLDELKESILADKSLATRT, DQDSRTALHWACSAGHTEIVEFLLQLGVPVNEK, DDAGWSPLHIAASAGRDEIVKALLIKGAQVNAV, NQNGCTALHYAASKNRHEIAVMLLEGGANPDAK, NHYDATAMHRAAAKGNLKMVHILLFYKASTNIQ, DTEGNTPLHLACDEERVEEAKLLVTQGASIYIE, and NKEEKTPLQVAKGGLGLILKRIAES.

In terms of assembly, part of transient complex containing PSMD10, PSMC4, PSMC5 and PAAF1 formed during the assembly of the 26S proteasome. Stays associated throughout the assembly of the PA700/19S RC and is released upon association with the 20S core. Interacts with PSMC4. Interacts with RB1. Interacts with CDK4. Interacts with MDM2. Interacts with RELA. Associates with a CDK4:CCND2 serine/threonine kinase complex. Interacts with ARHGDIA and increases the interaction between ARHGDIA and RHOA, hence promotes ARHGDIA inactivation of RHOA and ROCK.

It is found in the cytoplasm. The protein localises to the nucleus. Functionally, acts as a chaperone during the assembly of the 26S proteasome, specifically of the PA700/19S regulatory complex (RC). In the initial step of the base subcomplex assembly is part of an intermediate PSMD10:PSMC4:PSMC5:PAAF1 module which probably assembles with a PSMD5:PSMC2:PSMC1:PSMD2 module. Independently of the proteasome, regulates EGF-induced AKT activation through inhibition of the RHOA/ROCK/PTEN pathway, leading to prolonged AKT activation. Plays an important role in RAS-induced tumorigenesis. Its function is as follows. Acts as an oncoprotein by being involved in negative regulation of tumor suppressors RB1 and p53/TP53. Overexpression is leading to phosphorylation of RB1 and proteasomal degradation of RB1. Regulates CDK4-mediated phosphorylation of RB1 by competing with CDKN2A for binding with CDK4. Facilitates binding of MDM2 to p53/TP53 and the mono- and polyubiquitination of p53/TP53 by MDM2 suggesting a function in targeting the TP53:MDM2 complex to the 26S proteasome. Involved in p53-independent apoptosis. Involved in regulation of NF-kappa-B by retaining it in the cytoplasm. Binds to the NF-kappa-B component RELA and accelerates its XPO1/CRM1-mediated nuclear export. This is 26S proteasome non-ATPase regulatory subunit 10 (Psmd10) from Rattus norvegicus (Rat).